We begin with the raw amino-acid sequence, 98 residues long: NADH-ubiquinone oxidoreductase chain 4L (98 aa).

3 consecutive transmembrane segments (helical) span residues 1 to 21 (MTPI…GLAF), 26 to 46 (LLSA…ALSL), and 59 to 79 (APML…ALMV).

It belongs to the complex I subunit 4L family.

The protein resides in the mitochondrion membrane. The enzyme catalyses a ubiquinone + NADH + 5 H(+)(in) = a ubiquinol + NAD(+) + 4 H(+)(out). In terms of biological role, core subunit of the mitochondrial membrane respiratory chain NADH dehydrogenase (Complex I) which catalyzes electron transfer from NADH through the respiratory chain, using ubiquinone as an electron acceptor. Part of the enzyme membrane arm which is embedded in the lipid bilayer and involved in proton translocation. The sequence is that of NADH-ubiquinone oxidoreductase chain 4L (MT-ND4L) from Tetraodon nigroviridis (Spotted green pufferfish).